The chain runs to 151 residues: 3-hydroxyacyl-[acyl-carrier-protein] dehydratase FabZ (151 aa).

His56 is a catalytic residue.

The protein belongs to the thioester dehydratase family. FabZ subfamily.

It is found in the cytoplasm. It carries out the reaction a (3R)-hydroxyacyl-[ACP] = a (2E)-enoyl-[ACP] + H2O. In terms of biological role, involved in unsaturated fatty acids biosynthesis. Catalyzes the dehydration of short chain beta-hydroxyacyl-ACPs and long chain saturated and unsaturated beta-hydroxyacyl-ACPs. This Rhodopseudomonas palustris (strain HaA2) protein is 3-hydroxyacyl-[acyl-carrier-protein] dehydratase FabZ.